The following is a 570-amino-acid chain: Periplasmic trehalase (570 aa).

An N-terminal signal peptide occupies residues 1 to 34; that stretch reads MIPPEIRRSVLLQKAIKLALAGTLLTFASFSATA. Substrate-binding positions include R159, 166-167, N203, 212-214, 284-286, and G317; these read WD, RSQ, and RPE. Catalysis depends on proton donor/acceptor residues D319 and E503. Substrate is bound at residue E518. Residues 544–570 are disordered; sequence KPCDSVPSTRPASLSATPTKTPSAATQ. Over residues 554 to 570 the composition is skewed to low complexity; that stretch reads PASLSATPTKTPSAATQ.

The protein belongs to the glycosyl hydrolase 37 family. In terms of assembly, monomer.

Its subcellular location is the periplasm. The catalysed reaction is alpha,alpha-trehalose + H2O = alpha-D-glucose + beta-D-glucose. Its function is as follows. Provides the cells with the ability to utilize trehalose at high osmolarity by splitting it into glucose molecules that can subsequently be taken up by the phosphotransferase-mediated uptake system. This is Periplasmic trehalase from Salmonella typhimurium (strain LT2 / SGSC1412 / ATCC 700720).